A 247-amino-acid polypeptide reads, in one-letter code: Syntaxin-like protein fsv1 (247 aa).

Residues 27–94 (NPDEEIESSL…FEKQRRASSI (68 aa)) adopt a coiled-coil conformation. Positions 88-130 (QRRASSIPADGTSAFSANPQVASTNNKLTPLPSLQKTTSSSEG) are disordered. A compositionally biased stretch (polar residues) spans 100–130 (SAFSANPQVASTNNKLTPLPSLQKTTSSSEG). Positions 159–221 (QQMLNEQEES…DHAKNRLNKV (63 aa)) constitute a t-SNARE coiled-coil homology domain.

Its subcellular location is the golgi apparatus membrane. It is found in the prevacuolar compartment membrane. Its function is as follows. Involved in vesicle-mediated protein transport between the Golgi and the vacuole. The chain is Syntaxin-like protein fsv1 (fsv1) from Schizosaccharomyces pombe (strain 972 / ATCC 24843) (Fission yeast).